Reading from the N-terminus, the 85-residue chain is Large ribosomal subunit protein bL27 (85 aa).

The interval 1–21 (MAHKKGVGSTRNGRDSESKRL) is disordered.

The protein belongs to the bacterial ribosomal protein bL27 family.

This chain is Large ribosomal subunit protein bL27, found in Geobacter sulfurreducens (strain ATCC 51573 / DSM 12127 / PCA).